The primary structure comprises 3564 residues: CUB and sushi domain-containing protein 1 (3564 aa).

The first 29 residues, 1 to 29 (MTAWRKFKSLLLPLVLAVLCAGLLTAAKG), serve as a signal peptide directing secretion. Residues 30-3487 (QNCGGLVQGP…NHYQGTSSGS (3458 aa)) are Extracellular-facing. Cystine bridges form between C32–C58, C145–C185, C171–C202, C208–C234, C349–C389, C375–C406, C411–C437, C527–C567, C553–C580, and C584–C610. Residues 32–140 (CGGLVQGPNG…QGFKAMYEVL (109 aa)) enclose the CUB 1 domain. N40 and N57 each carry an N-linked (GlcNAc...) asparagine glycan. The 62-residue stretch at 143–204 (HTCGNPGEIL…WDFPAPFCRA (62 aa)) folds into the Sushi 1 domain. Residues 208–312 (CGGTLRGTSG…KGFNAQFQVK (105 aa)) form the CUB 2 domain. Residues 347-408 (DMCPDPGIPD…WNDHRPICRA (62 aa)) form the Sushi 2 domain. The region spanning 411 to 522 (CGSNLRGPSG…PGFKAVYQEI (112 aa)) is the CUB 3 domain. In terms of domain architecture, Sushi 3 spans 525–582 (GGCGDPGIPAYGKRTGSSFLHGDTLTFECQAAFELVGERVITCQKNNQWSGNKPSCVF). The CUB 4 domain occupies 584–692 (CFFNFTAPSG…RGFNITYTTF (109 aa)). N-linked (GlcNAc...) asparagine glycans are attached at residues N587 and N686. In terms of domain architecture, Sushi 4 spans 695 to 756 (NECHDPGIPV…WSSTVPRCEA (62 aa)). Cystine bridges form between C697–C738, C723–C754, C758–C784, C873–C913, C899–C926, and C930–C956. Residues 758–866 (CGGHLTASSG…VGFLIHYESV (109 aa)) form the CUB 5 domain. One can recognise a Sushi 5 domain in the interval 871–928 (DSCLDPGIPVNGQRHGSNFGIRSTVTFSCDPGYTLSDDEPLVCEKNHQWNHALPSCDA). The region spanning 930–1040 (CGGYIHGKSG…EGFNITFAEY (111 aa)) is the CUB 6 domain. Residues N955, N1015, and N1034 are each glycosylated (N-linked (GlcNAc...) asparagine). Positions 1043 to 1102 (EPCDDPGVPAFSRRIGFQFGVGDTLAFTCFQGYRLEGATKLTCLGGGRRVWSAPLPRCVA) constitute a Sushi 6 domain. 3 disulfides stabilise this stretch: C1045–C1085, C1071–C1100, and C1104–C1130. The CUB 7 domain maps to 1104-1212 (CGASVKGNEG…QGFQLTYTSF (109 aa)). N1184 and N1197 each carry an N-linked (GlcNAc...) asparagine glycan. The Sushi 7 domain maps to 1215 to 1275 (VKCEDPGIPN…WDKPMPSCVA (61 aa)). Intrachain disulfides connect C1217/C1258, C1244/C1273, C1277/C1304, C1391/C1431, C1417/C1447, C1451/C1477, C1564/C1604, C1590/C1621, C1625/C1651, C1741/C1781, C1767/C1798, and C1802/C1828. The region spanning 1277-1386 (CGGLVHAATS…SGFSIQFSTS (110 aa)) is the CUB 8 domain. Residues 1389-1449 (STCNDPGMPQ…WQPDPPSCIA (61 aa)) enclose the Sushi 8 domain. N1399 carries N-linked (GlcNAc...) asparagine glycosylation. In terms of domain architecture, CUB 9 spans 1451–1559 (CGGNLTGPAG…SGFAIEFKEK (109 aa)). N-linked (GlcNAc...) asparagine glycosylation is found at N1454 and N1572. The 62-residue stretch at 1562–1623 (EACFDPGNIM…WDRALPACQA (62 aa)) folds into the Sushi 9 domain. Positions 1625–1733 (CGGQYTGSEG…RGFHFVYQAV (109 aa)) constitute a CUB 10 domain. N1644 is a glycosylation site (N-linked (GlcNAc...) asparagine). Residues 1739-1800 (TQCSSVPEPR…WNDTIPSCVV (62 aa)) form the Sushi 10 domain. N-linked (GlcNAc...) asparagine glycosylation is found at N1792, N1805, and N1882. Positions 1802 to 1910 (CSGNFTQRRG…AGFHLEYKTV (109 aa)) constitute a CUB 11 domain. One can recognise a Sushi 11 domain in the interval 1913–1972 (AACQEPALPSNGIKIGDRYMVNDVLSFQCEPGYTLQGRSHISCMPGTVRRWNYPSPLCIA). 3 cysteine pairs are disulfide-bonded: C1915/C1955, C1941/C1970, and C1974/C2000. In terms of domain architecture, CUB 12 spans 1974–2082 (CGGTLTSMSG…QGFKLSYQAY (109 aa)). N2018 carries N-linked (GlcNAc...) asparagine glycosylation. Residues 2085–2144 (QNCPDPPAFQNGFMINSDYSVGQSISFECYPGYILLGHPVLTCQHGTDRNWNYPFPRCDA) enclose the Sushi 12 domain. 3 disulfides stabilise this stretch: C2087/C2127, C2113/C2142, and C2146/C2172. Residues 2146-2257 (CGYNVTSQNG…LNFHAFQLKR (112 aa)) form the CUB 13 domain. 3 N-linked (GlcNAc...) asparagine glycosylation sites follow: N2149, N2154, and N2187. Residues 2256–2317 (KRCPPPPAVP…FQGSPPTCEA (62 aa)) enclose the Sushi 13 domain. 3 disulfide bridges follow: C2258-C2300, C2286-C2315, and C2319-C2347. Residues 2319–2430 (CPANEVRTES…KGFKIRYAAP (112 aa)) enclose the CUB 14 domain. N-linked (GlcNAc...) asparagine glycosylation is found at N2358, N2394, N2400, N2445, N2470, and N2503. 15 Sushi domains span residues 2430 to 2492 (PYCS…LCQA), 2493 to 2554 (VSCG…TCKP), 2555 to 2619 (VPCP…RCKV), 2620 to 2677 (ISCG…RCLA), 2678 to 2735 (GHCG…VCVP), 2736 to 2793 (ITCG…ICRV), 2794 to 2856 (VNCS…KCLA), 2857 to 2914 (ISCG…HCSG), 2918 to 2975 (GFCG…VCEA), 2976 to 3034 (VSCG…DCTI), 3035 to 3094 (ISCG…LCKA), 3095 to 3152 (VLCN…QCLP), 3153 to 3210 (VFCG…TCID), 3214 to 3272 (TACP…ECIP), and 3273 to 3332 (HACR…VCKS). Cystine bridges form between C2432–C2473, C2459–C2490, C2495–C2537, C2521–C2552, C2557–C2602, C2588–C2617, C2622–C2662, C2648–C2675, C2680–C2720, C2706–C2733, C2738–C2778, and C2764–C2791. A glycan (N-linked (GlcNAc...) asparagine) is linked at N2605. Residues N2750 and N2761 are each glycosylated (N-linked (GlcNAc...) asparagine). N2795 carries an N-linked (GlcNAc...) asparagine glycan. Intrachain disulfides connect C2796/C2841, C2827/C2854, C2859/C2899, C2885/C2912, C2920/C2960, C2946/C2973, C2978/C3019, C3005/C3032, C3037/C3079, C3063/C3092, C3097/C3137, C3123/C3150, C3155/C3195, C3181/C3208, C3216/C3257, C3243/C3270, C3275/C3317, and C3302/C3330. An N-linked (GlcNAc...) asparagine glycan is attached at N2894. The N-linked (GlcNAc...) asparagine glycan is linked to N2963. N3022, N3056, and N3086 each carry an N-linked (GlcNAc...) asparagine glycan. Residues N3228 and N3260 are each glycosylated (N-linked (GlcNAc...) asparagine). N3339, N3379, and N3386 each carry an N-linked (GlcNAc...) asparagine glycan. Residues 3488-3508 (VAAAILVPFFALILSGFAFYL) form a helical membrane-spanning segment. The Cytoplasmic segment spans residues 3509-3564 (YKHRTRPKVQYNGYAGHENSNGQASFENPMYDTNLKPTEAKAVRFDTTLNTVCTVV).

This sequence belongs to the CSMD family.

It is found in the membrane. The sequence is that of CUB and sushi domain-containing protein 1 (Csmd1) from Mus musculus (Mouse).